Consider the following 494-residue polypeptide: Glycerol kinase (494 aa).

An ADP-binding site is contributed by threonine 13. 3 residues coordinate ATP: threonine 13, threonine 14, and serine 15. Threonine 13 is a binding site for sn-glycerol 3-phosphate. ADP is bound at residue arginine 17. Arginine 83, glutamate 84, tyrosine 135, and aspartate 244 together coordinate sn-glycerol 3-phosphate. Residues arginine 83, glutamate 84, tyrosine 135, aspartate 244, and glutamine 245 each coordinate glycerol. ADP-binding residues include threonine 266 and glycine 309. ATP contacts are provided by threonine 266, glycine 309, glutamine 313, and glycine 410. ADP contacts are provided by glycine 410 and asparagine 414.

The protein belongs to the FGGY kinase family.

It catalyses the reaction glycerol + ATP = sn-glycerol 3-phosphate + ADP + H(+). The protein operates within polyol metabolism; glycerol degradation via glycerol kinase pathway; sn-glycerol 3-phosphate from glycerol: step 1/1. With respect to regulation, inhibited by fructose 1,6-bisphosphate (FBP). Functionally, key enzyme in the regulation of glycerol uptake and metabolism. Catalyzes the phosphorylation of glycerol to yield sn-glycerol 3-phosphate. The chain is Glycerol kinase from Shewanella sp. (strain MR-7).